A 1988-amino-acid chain; its full sequence is Sodium channel protein type 9 subunit alpha (1988 aa).

Over 1–125 the chain is Cytoplasmic; that stretch reads MAMLPPPGPQ…RRISIKILVH (125 aa). The span at 26-39 shows a compositional bias: basic and acidic residues; it reads RIAERKSKEPKEEK. The tract at residues 26–55 is disordered; the sequence is RIAERKSKEPKEEKKDDDEEAPKPSSDLEA. The I repeat unit spans residues 112–410; sequence FSPLRRISIK…VAMAYEEQNQ (299 aa). A helical transmembrane segment spans residues 126–145; the sequence is SLFSMLIMCTILTNCIFMTM. Topologically, residues 146–150 are extracellular; it reads NNPPD. The chain crosses the membrane as a helical span at residues 151 to 172; it reads WTKNVEYTFTGIYTFESLVKIL. Residues 173–185 are Cytoplasmic-facing; it reads ARGFCVGEFTFLR. The helical transmembrane segment at 186–204 threads the bilayer; sequence DPWNWLDFVVIVFAYLTEF. Over 205–210 the chain is Extracellular; it reads VNLGNV. Asn-209 is a glycosylation site (N-linked (GlcNAc...) asparagine). Residues 211 to 227 form a helical membrane-spanning segment; the sequence is SALRTFRVLRALKTISV. Topologically, residues 228 to 241 are cytoplasmic; it reads IPGLKTIVGALIQS. Residues 242-267 form a helical membrane-spanning segment; the sequence is VKKLSDVMILTVFCLSVFALIGLQLF. Residues 268-346 are Extracellular-facing; the sequence is MGNLKHKCFR…PDYGYTSFDT (79 aa). Cys-275 and Cys-324 are disulfide-bonded. The N-linked (GlcNAc...) asparagine glycan is linked to Asn-283. The segment at residues 347–363 is an intramembrane region (pore-forming); that stretch reads FSWAFLALFRLMTQDYW. Residues 364–376 are Extracellular-facing; that stretch reads ENLYQQTLRAAGK. The chain crosses the membrane as a helical span at residues 377–402; that stretch reads TYMIFFVVVIFLGSFYLINLILAVVA. The Cytoplasmic segment spans residues 403-745; sequence MAYEEQNQAN…CIYFIVMDPF (343 aa). Over residues 461-471 the composition is skewed to low complexity; sequence SSSETSKLSSK. Disordered stretches follow at residues 461-543 and 565-611; these read SSSE…RGSL and GSET…SPPM. Residues 474-486 are compositionally biased toward basic residues; sequence KERRNRRKKKNQK. Composition is skewed to basic and acidic residues over residues 489 to 510 and 573 to 585; these read SSGE…DSIR and DEHS…ESRR. An II repeat occupies 726-989; the sequence is CSPYWIKFKK…EEDPDANNLQ (264 aa). The helical transmembrane segment at 746–762 threads the bilayer; that stretch reads VDLAITICIVLNTLFMA. The Extracellular portion of the chain corresponds to 763 to 771; it reads MEHHPMTEE. Residues 772–796 traverse the membrane as a helical segment; the sequence is FKNVLAIGNLVFTGIFAAEMVLKLI. The Cytoplasmic portion of the chain corresponds to 797 to 805; that stretch reads AMDPYEYFQ. Residues 806-822 traverse the membrane as a helical segment; it reads VGWNIFDSLIVTLSLVE. At 823–831 the chain is on the extracellular side; that stretch reads LFLADVEGL. Residues 832 to 848 form a helical membrane-spanning segment; sequence SVLRSFRLLRVFKLAKS. At 849 to 865 the chain is on the cytoplasmic side; that stretch reads WPTLNMLIKIIGNSVGA. The chain crosses the membrane as a helical span at residues 866–888; sequence LGNLTLVLAIIVFIFAVVGMQLF. Topologically, residues 889–915 are extracellular; sequence GKSYKECVCKINDDCTLPRWHMNDFFH. The cysteines at positions 897 and 903 are disulfide-linked. The pore-forming intramembrane region spans 916 to 928; that stretch reads SFLIVFRVLCGEW. At 929–940 the chain is on the extracellular side; it reads IETMWDCMEVAG. An intrachain disulfide couples Cys-935 to Cys-944. A helical transmembrane segment spans residues 941 to 967; sequence QAMCLIVYMMVMVIGNLVVLNLFLALL. At 968-1187 the chain is on the cytoplasmic side; it reads LSSFSSDNLT…WWNIRKTCYK (220 aa). Residues 1102–1148 form a disordered region; sequence NAEELSSDSDSEYSKVRLNRSSSSECSTVDNPLPGEGEEAEAEPMNS. Residues 1120–1131 show a composition bias toward polar residues; that stretch reads NRSSSSECSTVD. Positions 1137-1148 are enriched in acidic residues; sequence EGEEAEAEPMNS. One copy of the III repeat lies at 1180-1488; that stretch reads NIRKTCYKIV…KKYYNAMKKL (309 aa). The helical transmembrane segment at 1188 to 1212 threads the bilayer; sequence IVEHSWFESFIVLMILLSSGALAFE. Topologically, residues 1213-1224 are extracellular; sequence DIYIERKKTIKI. Residues 1225-1250 form a helical membrane-spanning segment; that stretch reads ILEYADKIFTYIFILEMLLKWIAYGY. Residues 1251–1252 are Cytoplasmic-facing; the sequence is KT. A helical membrane pass occupies residues 1253 to 1278; that stretch reads YFTNAWCWLDFLIVDVSLVTLVANTL. The Extracellular segment spans residues 1279 to 1287; the sequence is GYSDLGPIK. A helical membrane pass occupies residues 1288 to 1304; it reads SLRTLRALRPLRALSRF. Topologically, residues 1305-1317 are cytoplasmic; it reads EGMRVVVNALIGA. A helical transmembrane segment spans residues 1318-1342; it reads IPSIMNVLLVCLIFWLIFSIMGVNL. The Extracellular segment spans residues 1343–1394; it reads FAGKFYECINTTDGSRFPASQVPNRSECFALMNVSQNVRWKNLKVNFDNVGL. The cysteines at positions 1350 and 1370 are disulfide-linked. N-linked (GlcNAc...) asparagine glycans are attached at residues Asn-1352, Asn-1366, and Asn-1375. The pore-forming intramembrane region spans 1395–1405; that stretch reads GYLSLLQVATF. Over 1406 to 1431 the chain is Extracellular; it reads KGWTIIMYAAVDSVNVDKQPKYEYSL. The chain crosses the membrane as a helical span at residues 1432–1457; sequence YMYIYFVVFIIFGSFFTLNLFIGVII. The Cytoplasmic portion of the chain corresponds to 1458–1514; the sequence is DNFNQQKKKLGGQDIFMTEEQKKYYNAMKKLGSKKPQKPIPRPGNKIQGCIFDLVTN. At Ser-1490 the chain carries Phosphoserine; by PKC. An IV repeat occupies 1497–1795; sequence IPRPGNKIQG…WEKFDPDATQ (299 aa). The helical transmembrane segment at 1515–1534 threads the bilayer; the sequence is QAFDISIMVLICLNMVTMMV. Over 1535 to 1545 the chain is Extracellular; it reads EKEGQSQHMTE. A helical membrane pass occupies residues 1546 to 1567; that stretch reads VLYWINVVFIILFTGECVLKLI. Residues 1568 to 1576 are Cytoplasmic-facing; the sequence is SLRHYYFTV. A helical membrane pass occupies residues 1577-1598; that stretch reads GWNIFDFVVVIISIVGMFLADL. Topologically, residues 1599-1607 are extracellular; the sequence is IETYFVSPT. Residues 1608–1627 traverse the membrane as a helical segment; sequence LFRVIRLARIGRILRLVKGA. Topologically, residues 1628–1640 are cytoplasmic; it reads KGIRTLLFALMMS. The helical transmembrane segment at 1641–1663 threads the bilayer; that stretch reads LPALFNIGLLLFLVMFIYAIFGM. The Extracellular portion of the chain corresponds to 1664–1686; the sequence is SNFAYVKKEDGINDMFNFETFGN. Residues 1687–1699 constitute an intramembrane region (pore-forming); that stretch reads SMICLFQITTSAG. The Extracellular portion of the chain corresponds to 1700 to 1733; sequence WDGLLAPILNSKPPDCDPKKVHPGSSVEGDCGNP. Residues Cys-1715 and Cys-1730 are joined by a disulfide bond. The chain crosses the membrane as a helical span at residues 1734–1759; it reads SVGIFYFVSYIIISFLVVVNMYIAVI. Topologically, residues 1760 to 1988 are cytoplasmic; the sequence is LENFSVATEE…KGKDSKESKK (229 aa). Residues 1889 to 1918 form the IQ domain; sequence EDVSATVIQRAYRRYRLRQNVKNISSIYIK. Residues 1934–1988 are disordered; the sequence is FDNVNENSSPEKTDATSSTTSPPSYDSVTKPDKEKYEQDRTEKEDKGKDSKESKK. Positions 1948–1961 are enriched in low complexity; sequence ATSSTTSPPSYDSV. A compositionally biased stretch (basic and acidic residues) spans 1962-1988; that stretch reads TKPDKEKYEQDRTEKEDKGKDSKESKK.

The protein belongs to the sodium channel (TC 1.A.1.10) family. Nav1.7/SCN9A subfamily. In terms of assembly, the Nav1.7 voltage-gated sodium channel consists of an ion-conducting alpha subunit SCN9A which is functional on its own regulated by one or more beta-1 (SCN1B), beta-2 (SCN2B), beta-3 (SCN3B) and beta-4 (SCN4B) subunits. SCN1B and SCN3B are non-covalently associated with SCN9A. SCN2B and SCN4B are disulfide-linked to SCN9A. SCN1B regulates channel inactivation. Interacts with NEDD4 and NEDD4L; regulates Nav1.7 activity most probably through ubiquitination and subsequent endocytosis. Interacts with TMEM233; modulates the gating properties of NaV1.7. In terms of processing, phosphorylation at Ser-1490 by PKC in a highly conserved cytoplasmic loop increases peak sodium currents. Ubiquitinated by NEDD4L; which may promote its endocytosis. Expressed strongly in dorsal root ganglion, with only minor levels elsewhere in the body, smooth muscle cells, MTC cell line and C-cell carcinoma. Also expressed in vagus nerves within the head and neck region. Isoform 1 is expressed preferentially in the central and peripheral nervous system. Isoform 2 is expressed preferentially in the dorsal root ganglion.

The protein localises to the cell membrane. It is found in the cell projection. Its subcellular location is the neuron projection. It localises to the axon. It carries out the reaction Na(+)(in) = Na(+)(out). Its activity is regulated as follows. Inhibited by tetrodotoxin. Weakly inhibited by saxitoxin. Inhibited by the spider huwentoxin-IV that binds the extracellular loop S3-S4 of repeat II. Inhibited by the spider protoxin-II that binds the extracellular loop S3-S4 of repeats II and IV. Inhibited by the scorpion alpha-toxins CvIV4 and AaH2. Inhibited by the conotoxin GVIIJ. Inhibited by the spider beta/delta-theraphotoxin-Pre1a. Its function is as follows. Pore-forming subunit of Nav1.7, a voltage-gated sodium (Nav) channel that directly mediates the depolarizing phase of action potentials in excitable membranes. Navs, also called VGSCs (voltage-gated sodium channels) or VDSCs (voltage-dependent sodium channels), operate by switching between closed and open conformations depending on the voltage difference across the membrane. In the open conformation they allow Na(+) ions to selectively pass through the pore, along their electrochemical gradient. The influx of Na(+) ions provokes membrane depolarization, initiating the propagation of electrical signals throughout cells and tissues. Nav1.7 plays a crucial role in controlling the excitability and action potential propagation from nociceptor neurons, thereby contributing to the sensory perception of pain. This Homo sapiens (Human) protein is Sodium channel protein type 9 subunit alpha.